The chain runs to 188 residues: GMP synthase [glutamine-hydrolyzing] subunit A (188 aa).

Residues lysine 3–arginine 188 enclose the Glutamine amidotransferase type-1 domain. The active-site Nucleophile is the cysteine 79. Residues histidine 166 and glutamate 168 contribute to the active site.

As to quaternary structure, heterodimer composed of a glutamine amidotransferase subunit (A) and a GMP-binding subunit (B).

The catalysed reaction is XMP + L-glutamine + ATP + H2O = GMP + L-glutamate + AMP + diphosphate + 2 H(+). The protein operates within purine metabolism; GMP biosynthesis; GMP from XMP (L-Gln route): step 1/1. Catalyzes the synthesis of GMP from XMP. The sequence is that of GMP synthase [glutamine-hydrolyzing] subunit A from Ignicoccus hospitalis (strain KIN4/I / DSM 18386 / JCM 14125).